Consider the following 275-residue polypeptide: 4-hydroxy-tetrahydrodipicolinate reductase (275 aa).

Residues 13–18 and 108–110 contribute to the NAD(+) site; these read GAAGKM and GTT. H164 acts as the Proton donor/acceptor in catalysis. H165 contributes to the (S)-2,3,4,5-tetrahydrodipicolinate binding site. K168 functions as the Proton donor in the catalytic mechanism. 174-175 is a binding site for (S)-2,3,4,5-tetrahydrodipicolinate; that stretch reads GT.

The protein belongs to the DapB family.

It localises to the cytoplasm. It carries out the reaction (S)-2,3,4,5-tetrahydrodipicolinate + NAD(+) + H2O = (2S,4S)-4-hydroxy-2,3,4,5-tetrahydrodipicolinate + NADH + H(+). The enzyme catalyses (S)-2,3,4,5-tetrahydrodipicolinate + NADP(+) + H2O = (2S,4S)-4-hydroxy-2,3,4,5-tetrahydrodipicolinate + NADPH + H(+). Its pathway is amino-acid biosynthesis; L-lysine biosynthesis via DAP pathway; (S)-tetrahydrodipicolinate from L-aspartate: step 4/4. Catalyzes the conversion of 4-hydroxy-tetrahydrodipicolinate (HTPA) to tetrahydrodipicolinate. In Acaryochloris marina (strain MBIC 11017), this protein is 4-hydroxy-tetrahydrodipicolinate reductase.